We begin with the raw amino-acid sequence, 71 residues long: Exodeoxyribonuclease 7 small subunit (71 aa).

The protein belongs to the XseB family. Heterooligomer composed of large and small subunits.

It is found in the cytoplasm. The enzyme catalyses Exonucleolytic cleavage in either 5'- to 3'- or 3'- to 5'-direction to yield nucleoside 5'-phosphates.. Functionally, bidirectionally degrades single-stranded DNA into large acid-insoluble oligonucleotides, which are then degraded further into small acid-soluble oligonucleotides. The chain is Exodeoxyribonuclease 7 small subunit from Streptococcus pyogenes serotype M1.